A 676-amino-acid polypeptide reads, in one-letter code: Zinc finger protein 418 (676 aa).

The KRAB domain maps to 5–91 (VAFEDVAVNF…HSCEMCGAIL (87 aa)). 16 consecutive C2H2-type zinc fingers follow at residues 82 to 105 (HSCEMCGAILGDILHLADHQGTHH), 230 to 252 (CYCWECGKSFSKYDSVSNHQRVH), 258 to 280 (YECGECGKSFSHKGSLVQHQRVH), 286 to 308 (YECGECGKSFSHKGSLVQHQRVH), 314 to 336 (YECGECGKSFSQNGTLIKHQRVH), 342 to 364 (YECEECGKCFTQKGNLIQHQRGH), 370 to 392 (YECEECGKCFSQKGTLTEHHRVH), 398 to 420 (YECGECGKSFSRKGHLRNHQRGH), 426 to 448 (YECGECGKSFSRKGNLIQHQRSH), 454 to 476 (YECRECRKLFRGKSHLIEHQRVH), 482 to 504 (YECNECGKSFQDSSGFRVHQRVH), 510 to 532 (FECSECGKSFPQSCSLLRHRRVH), 538 to 560 (YECGECGKSFHQSSSLLRHQKTH), 591 to 613 (YECRECGKTFTRRSAHFKHQRLH), 619 to 641 (YECSECGKSFAETFSLTEHRRVH), and 647 to 669 (YECSECGKSFHRSSSLLRHQRVH).

Belongs to the krueppel C2H2-type zinc-finger protein family. As to expression, highly expressed in heart.

It localises to the nucleus. Functionally, transcriptional repressor. May play a role as regulator of the ubiquitin-proteasome system and autophagy-lysosomal pathway. This chain is Zinc finger protein 418 (ZNF418), found in Homo sapiens (Human).